Consider the following 366-residue polypeptide: 3-isopropylmalate dehydrogenase (366 aa).

Residue 77 to 90 participates in NAD(+) binding; the sequence is GPKWDDNPPHLRPE. Substrate is bound by residues Arg97, Arg107, Arg135, and Asp223. Residues Asp223, Asp246, and Asp250 each contribute to the Mg(2+) site. NAD(+) is bound at residue 280-292; it reads GSAPDIAGMNKAN.

The protein belongs to the isocitrate and isopropylmalate dehydrogenases family. LeuB type 1 subfamily. Homodimer. Requires Mg(2+) as cofactor. It depends on Mn(2+) as a cofactor.

It is found in the cytoplasm. The enzyme catalyses (2R,3S)-3-isopropylmalate + NAD(+) = 4-methyl-2-oxopentanoate + CO2 + NADH. Its pathway is amino-acid biosynthesis; L-leucine biosynthesis; L-leucine from 3-methyl-2-oxobutanoate: step 3/4. Functionally, catalyzes the oxidation of 3-carboxy-2-hydroxy-4-methylpentanoate (3-isopropylmalate) to 3-carboxy-4-methyl-2-oxopentanoate. The product decarboxylates to 4-methyl-2 oxopentanoate. This chain is 3-isopropylmalate dehydrogenase (leuB), found in Bacillus caldotenax.